The primary structure comprises 329 residues: Lipoyl synthase (329 aa).

A disordered region spans residues 1-23 (MTDLTATPAPAEPAASAYDPTAK). 7 residues coordinate [4Fe-4S] cluster: cysteine 76, cysteine 81, cysteine 87, cysteine 102, cysteine 106, cysteine 109, and serine 316. The region spanning 87–305 (CFGKGTATFM…EEEAYKMGFT (219 aa)) is the Radical SAM core domain.

This sequence belongs to the radical SAM superfamily. Lipoyl synthase family. The cofactor is [4Fe-4S] cluster.

It is found in the cytoplasm. It catalyses the reaction [[Fe-S] cluster scaffold protein carrying a second [4Fe-4S](2+) cluster] + N(6)-octanoyl-L-lysyl-[protein] + 2 oxidized [2Fe-2S]-[ferredoxin] + 2 S-adenosyl-L-methionine + 4 H(+) = [[Fe-S] cluster scaffold protein] + N(6)-[(R)-dihydrolipoyl]-L-lysyl-[protein] + 4 Fe(3+) + 2 hydrogen sulfide + 2 5'-deoxyadenosine + 2 L-methionine + 2 reduced [2Fe-2S]-[ferredoxin]. It participates in protein modification; protein lipoylation via endogenous pathway; protein N(6)-(lipoyl)lysine from octanoyl-[acyl-carrier-protein]: step 2/2. Functionally, catalyzes the radical-mediated insertion of two sulfur atoms into the C-6 and C-8 positions of the octanoyl moiety bound to the lipoyl domains of lipoate-dependent enzymes, thereby converting the octanoylated domains into lipoylated derivatives. In Burkholderia mallei (strain NCTC 10247), this protein is Lipoyl synthase.